The primary structure comprises 183 residues: GTP cyclohydrolase 1 (183 aa).

Residues C71, H74, and C142 each coordinate Zn(2+).

It belongs to the GTP cyclohydrolase I family. In terms of assembly, toroid-shaped homodecamer, composed of two pentamers of five dimers.

It catalyses the reaction GTP + H2O = 7,8-dihydroneopterin 3'-triphosphate + formate + H(+). It functions in the pathway cofactor biosynthesis; 7,8-dihydroneopterin triphosphate biosynthesis; 7,8-dihydroneopterin triphosphate from GTP: step 1/1. In Leptospira interrogans serogroup Icterohaemorrhagiae serovar copenhageni (strain Fiocruz L1-130), this protein is GTP cyclohydrolase 1.